The primary structure comprises 2209 residues: Orsellinic acid synthase armB (2209 aa).

The N-terminal acylcarrier protein transacylase domain (SAT) stretch occupies residues 38–261; that stretch reads LLLDACYYAF…HKTTVDALYH (224 aa). Residues 391–817 enclose the Ketosynthase family 3 (KS3) domain; that stretch reads QEPIAICGMS…GSNGALLLEE (427 aa). Residues Cys-561, His-696, and His-736 each act as for beta-ketoacyl synthase activity in the active site. The malonyl-CoA:ACP transacylase (MAT) domain stretch occupies residues 914–1239; it reads VFVFSGQGGQ…NLTLSSSLSQ (326 aa). Ser-1008 (for acyl/malonyl transferase activity) is an active-site residue. Residues 1306–1436 form an N-terminal hotdog fold region; sequence MLQSWAQFPS…GQFRPLLVAD (131 aa). The PKS/mFAS DH domain maps to 1306 to 1613; sequence MLQSWAQFPS…FKKLRLNTLQ (308 aa). Residues 1335–1610 are product template (PT) domain; sequence ITGHIVGDVP…GMCFKKLRLN (276 aa). His-1338 serves as the catalytic Proton acceptor; for dehydratase activity. A C-terminal hotdog fold region spans residues 1463 to 1613; that stretch reads AEVITTRTAY…FKKLRLNTLQ (151 aa). Asp-1524 serves as the catalytic Proton donor; for dehydratase activity. 2 Carrier domains span residues 1659-1734 and 1844-1921; these read VDVQ…SSTI and SSSS…SSKQ. O-(pantetheine 4'-phosphoryl)serine occurs at positions 1693 and 1881. The tract at residues 1917 to 1945 is disordered; that stretch reads ISSKQPGKSPKPSEEATMDPDKEEDLSDL. Residues 1932–1943 show a composition bias toward acidic residues; that stretch reads ATMDPDKEEDLS. Residues 1962 to 2201 are thioesterase (TE) domain; that stretch reads VPMSVQKSSS…LGAVTQALVD (240 aa).

It carries out the reaction 3 malonyl-CoA + acetyl-CoA + 2 H(+) = orsellinate + 3 CO2 + 4 CoA. The protein operates within secondary metabolite biosynthesis. Its function is as follows. Non-reducing polyketide synthase, part of the gene cluster that mediates the biosynthesis of melleolides, a range of antifungal and phytotoxic polyketide derivatives composed of an orsellinic acid (OA) moiety esterified to various sesquiterpene alcohols. The first step in melleolides biosynthesis is performed by the delta(6)-protoilludene synthase PRO1 which catalyzes the cyclization of farnesyl diphosphate to protoilludene. The orsellinic acid synthase armB produces OA by condensing acetyl-CoA with 3 malonyl-CoA units in a three-round chain elongation reaction folowed by a C2-C7 ring closure. ArmB further catalyzes the trans-esterification of OA to the various sesquiterpene alcohols resulting from the hydroxylation of protoilludene. The melleolides cluster also includes 5 cytochrome P450 monooxygenases, 4 NAD(+)-dependent oxidoreductases, one flavin-dependent oxidoreductase, and one O-methyltransferase. The cytochrome P450 monooxygenases may be involved in protoilludene hydroxylation to elaborate melleolides with multiple alcohol groups, such as melleolide D, which carries alcohol functionalities at C-4, C-5, C-10, and C-13. The role of the NAD(+)-dependent enzymes remains unknown. Numerous melleolides, including arnamial, show 5'-O-methylation of the aromatic moiety which may be catalyzed by the methyltransferase encoded in the cluster. The flavin-dependent oxidoreductase might represent the dehydrogenase yielding the aldehyde in position 1 of arnamial and other melleolides. Finally, several halogenase localized outside of the cluster (armH1 to armH5), are able to catalyze the transfer of a single chlorine atom to the melleolide backbone, resulting in a 6'-chloromelleolide product. In Armillaria mellea (Honey mushroom), this protein is Orsellinic acid synthase armB.